Here is a 154-residue protein sequence, read N- to C-terminus: MKNKITVILKKNLANLGSIGTVVKVSSGYAFNYLIPRDFAQLATQGSLKHHKMFLDMKQQKLDEIQDKLQASAQKFNKISKISVKKKVGNNNQIFGSVNDKEIISKLFSITGEKLEKKNIYLPNIKALGIYNLNIIFTSDIQVSMKLQILPFFA.

It belongs to the bacterial ribosomal protein bL9 family.

The protein localises to the plastid. It localises to the chloroplast. Its function is as follows. Binds to the 23S rRNA. This is Large ribosomal subunit protein bL9c from Gracilaria tenuistipitata var. liui (Red alga).